The primary structure comprises 25 residues: uncharacterized protein (25 aa).

The protein resides in the plastid. Its subcellular location is the chloroplast. This is an uncharacterized protein from Trieres chinensis (Marine centric diatom).